The sequence spans 121 residues: MTIEQILEAIENMKVLELNELVKAAEEKFGVSASAPVVVGGPVAGAAVEEEQTEFDVVLENAGASKINVIKVVRELTGLGLKEAKEAVDGAPKTLKEGVSKEEAEQIKAKLEEAGAAVTVK.

It belongs to the bacterial ribosomal protein bL12 family. In terms of assembly, homodimer. Part of the ribosomal stalk of the 50S ribosomal subunit. Forms a multimeric L10(L12)X complex, where L10 forms an elongated spine to which 2 to 4 L12 dimers bind in a sequential fashion. Binds GTP-bound translation factors.

In terms of biological role, forms part of the ribosomal stalk which helps the ribosome interact with GTP-bound translation factors. Is thus essential for accurate translation. The protein is Large ribosomal subunit protein bL12 of Alkaliphilus oremlandii (strain OhILAs) (Clostridium oremlandii (strain OhILAs)).